A 350-amino-acid chain; its full sequence is Geranylgeranyl pyrophosphate synthase (350 aa).

Residues Lys66, Arg69, and His98 each coordinate isopentenyl diphosphate. Positions 105 and 109 each coordinate Mg(2+). Residue Arg114 participates in dimethylallyl diphosphate binding. Arg115 contributes to the isopentenyl diphosphate binding site. Dimethylallyl diphosphate is bound by residues Lys200, Thr201, Gln236, Asn243, and Lys263.

Belongs to the FPP/GGPP synthase family. Mg(2+) serves as cofactor.

The enzyme catalyses isopentenyl diphosphate + dimethylallyl diphosphate = (2E)-geranyl diphosphate + diphosphate. It catalyses the reaction isopentenyl diphosphate + (2E)-geranyl diphosphate = (2E,6E)-farnesyl diphosphate + diphosphate. The catalysed reaction is isopentenyl diphosphate + (2E,6E)-farnesyl diphosphate = (2E,6E,10E)-geranylgeranyl diphosphate + diphosphate. The protein operates within secondary metabolite biosynthesis; terpenoid biosynthesis. Geranylgeranyl pyrophosphate synthase; part of the gene cluster that mediates the biosynthesis of pleuromutilin, a tricyclic diterpene showing antibacterial properties. The geranylgeranyl diphosphate (GGPP) synthase catalyzes the first step in pleuromutilin biosynthesis. GGPP is then substrate of the premutilin synthase (PS) to yield premutilin. Premutilin synthase is a bifunctional enzyme composed of the fusion of a class II diterpene cyclase (DTC) and a class I diterpene synthase (DTS), with the corresponding domains and active sites containing characteristic aspartate-rich motifs. GGPP is first converted to mutildienyl-diphosphate (MPP) at the class II DTC site. MPP is subsequently further cyclized at the class I DTS site, followed by a 1,5-hydride shift and addition of water prior to terminating deprotonation, to yield premutilin. In addition to the aforementioned GGPP synthase and bifunctional diterpene synthase, the cluster also contains three cytochrome P450 monooxygenases, a short-chain alcohol dehydrogenase, and an acyltransferase, involved in the conversion of premutilin to pleuromutilin. The cytochrome P450 monooxygenases P450-1 and P450-2 hydroxylate premutilin at C-11 and C-3, respectively, producing 11-hydroxypremutilin and 3-hydroxypremutilin. The combination of the actions of both ple5 and ple6 leads to the production of 3,11-dihydroxypremutilin. The short chain dehydrogenase SDR further converts 3,11-dihydroxypremutilin into mutilin. The acetyltransferase ATF then acetylates mutilin to produce 14-O-acetylmutilin. Finally, the cytochrome P450 monooxygenase P450-3 catalyzes hydroxylation on the alpha position of the acetyl side chain of 14-O-acetylmutilin to yield pleuromutilin. The chain is Geranylgeranyl pyrophosphate synthase from Clitopilus passeckerianus (Pleurotus passeckerianus).